The sequence spans 307 residues: Cytidine deaminase 7 (307 aa).

CMP/dCMP-type deaminase domains lie at 22-155 (TEPI…FTPD) and 185-307 (SDCS…FITE). 63 to 65 (NVE) contacts substrate. Histidine 76 lines the Zn(2+) pocket. The active-site Proton donor is glutamate 78. Zn(2+) contacts are provided by cysteine 111 and cysteine 114.

This sequence belongs to the cytidine and deoxycytidylate deaminase family. In terms of assembly, homodimer. Requires Zn(2+) as cofactor.

It catalyses the reaction cytidine + H2O + H(+) = uridine + NH4(+). The catalysed reaction is 2'-deoxycytidine + H2O + H(+) = 2'-deoxyuridine + NH4(+). This enzyme scavenges exogenous and endogenous cytidine and 2'-deoxycytidine for UMP synthesis. This Arabidopsis thaliana (Mouse-ear cress) protein is Cytidine deaminase 7 (CDA7).